Reading from the N-terminus, the 114-residue chain is Probable 4-amino-4-deoxy-L-arabinose-phosphoundecaprenol flippase subunit ArnE (114 aa).

3 helical membrane passes run 38-58 (LTLR…LLWL), 64-84 (LPLS…TLAA), and 94-114 (LRHW…SWHL). Residues 43-112 (LAIAVVSLGL…IIFGILLMSW (70 aa)) form the EamA domain.

Belongs to the ArnE family. As to quaternary structure, heterodimer of ArnE and ArnF.

It is found in the cell inner membrane. It functions in the pathway bacterial outer membrane biogenesis; lipopolysaccharide biosynthesis. Its function is as follows. Translocates 4-amino-4-deoxy-L-arabinose-phosphoundecaprenol (alpha-L-Ara4N-phosphoundecaprenol) from the cytoplasmic to the periplasmic side of the inner membrane. This Yersinia pseudotuberculosis serotype O:1b (strain IP 31758) protein is Probable 4-amino-4-deoxy-L-arabinose-phosphoundecaprenol flippase subunit ArnE.